The chain runs to 1042 residues: FHIP family protein AAEL005291 (1042 aa).

The segment covering 1–14 has biased composition (polar residues); the sequence is MSWLRSSPLRQSFS. 4 disordered regions span residues 1–31, 494–514, 821–866, and 905–977; these read MSWL…GGNS, NNTS…PQGG, PHSG…KRND, and SNSS…GSPH. The span at 839-859 shows a compositional bias: polar residues; that stretch reads VSMTSNLSQTTPMQLTPSSSY. Composition is skewed to low complexity over residues 905–940 and 956–976; these read SNSS…FMGS and PSIG…TGSP.

The protein belongs to the FHIP family.

The sequence is that of FHIP family protein AAEL005291 from Aedes aegypti (Yellowfever mosquito).